The primary structure comprises 200 residues: LHFPL tetraspan subfamily member 6 protein (200 aa).

The first 23 residues, 1 to 23 (MASSLTCTGVIWALLSFLSAATS), serve as a signal peptide directing secretion. Helical transmembrane passes span 84 to 104 (ICTI…LTAL), 123 to 143 (GIQF…PLGW), and 166 to 186 (IGWA…LCTW).

Belongs to the LHFP family.

It is found in the membrane. The polypeptide is LHFPL tetraspan subfamily member 6 protein (Rattus norvegicus (Rat)).